Reading from the N-terminus, the 282-residue chain is Pantothenate synthetase (282 aa).

30 to 37 serves as a coordination point for ATP; the sequence is MGALHAGH. H37 functions as the Proton donor in the catalytic mechanism. Q61 lines the (R)-pantoate pocket. Q61 serves as a coordination point for beta-alanine. Residue 147-150 participates in ATP binding; that stretch reads GEKD. Q153 is a binding site for (R)-pantoate. ATP is bound by residues V176 and 184–187; that span reads LSSR.

This sequence belongs to the pantothenate synthetase family. As to quaternary structure, homodimer.

The protein resides in the cytoplasm. The enzyme catalyses (R)-pantoate + beta-alanine + ATP = (R)-pantothenate + AMP + diphosphate + H(+). It functions in the pathway cofactor biosynthesis; (R)-pantothenate biosynthesis; (R)-pantothenate from (R)-pantoate and beta-alanine: step 1/1. In terms of biological role, catalyzes the condensation of pantoate with beta-alanine in an ATP-dependent reaction via a pantoyl-adenylate intermediate. This is Pantothenate synthetase from Bacteroides thetaiotaomicron (strain ATCC 29148 / DSM 2079 / JCM 5827 / CCUG 10774 / NCTC 10582 / VPI-5482 / E50).